The following is a 149-amino-acid chain: 3-dehydroquinate dehydratase (149 aa).

Y26 functions as the Proton acceptor in the catalytic mechanism. Positions 77, 83, and 90 each coordinate substrate. H103 acts as the Proton donor in catalysis. Substrate is bound by residues 104-105 (LS) and R114.

This sequence belongs to the type-II 3-dehydroquinase family. In terms of assembly, homododecamer.

It catalyses the reaction 3-dehydroquinate = 3-dehydroshikimate + H2O. The protein operates within metabolic intermediate biosynthesis; chorismate biosynthesis; chorismate from D-erythrose 4-phosphate and phosphoenolpyruvate: step 3/7. Functionally, catalyzes a trans-dehydration via an enolate intermediate. The chain is 3-dehydroquinate dehydratase from Edwardsiella ictaluri (strain 93-146).